Consider the following 511-residue polypeptide: Maturase K (511 aa).

It belongs to the intron maturase 2 family. MatK subfamily.

Its subcellular location is the plastid. It localises to the chloroplast. In terms of biological role, usually encoded in the trnK tRNA gene intron. Probably assists in splicing its own and other chloroplast group II introns. The sequence is that of Maturase K from Melica altissima (Siberian melic grass).